The chain runs to 55 residues: uncharacterized protein (55 aa).

The interval 1–22 is disordered; the sequence is MPALKSHVRPNSAAPARRQPWP.

This is an uncharacterized protein from Rhodobacter capsulatus (Rhodopseudomonas capsulata).